The sequence spans 264 residues: NAD-capped RNA hydrolase NudC (264 aa).

Position 70 (Arg70) interacts with substrate. Cys99 and Cys102 together coordinate Zn(2+). Glu112 serves as a coordination point for substrate. Residues Cys117 and Cys120 each coordinate Zn(2+). Tyr125 is a binding site for substrate. The region spanning 126 to 253 (PVICPSIIVA…TIARKLIHVT (128 aa)) is the Nudix hydrolase domain. Residues Ala162, Glu178, and Glu182 each coordinate a divalent metal cation. Positions 163–184 (GFVEVGETFEQAVQREVFEETG) match the Nudix box motif. Substrate is bound at residue 196–203 (QPWAFPNS). Glu223 contributes to the a divalent metal cation binding site. Position 246 (Ala246) interacts with substrate.

Belongs to the Nudix hydrolase family. NudC subfamily. In terms of assembly, homodimer. Mg(2+) is required as a cofactor. Requires Mn(2+) as cofactor. Zn(2+) serves as cofactor.

It carries out the reaction a 5'-end NAD(+)-phospho-ribonucleoside in mRNA + H2O = a 5'-end phospho-adenosine-phospho-ribonucleoside in mRNA + beta-nicotinamide D-ribonucleotide + 2 H(+). It catalyses the reaction NAD(+) + H2O = beta-nicotinamide D-ribonucleotide + AMP + 2 H(+). The catalysed reaction is NADH + H2O = reduced beta-nicotinamide D-ribonucleotide + AMP + 2 H(+). Functionally, mRNA decapping enzyme that specifically removes the nicotinamide adenine dinucleotide (NAD) cap from a subset of mRNAs by hydrolyzing the diphosphate linkage to produce nicotinamide mononucleotide (NMN) and 5' monophosphate mRNA. The NAD-cap is present at the 5'-end of some mRNAs and stabilizes RNA against 5'-processing. Has preference for mRNAs with a 5'-end purine. Catalyzes the hydrolysis of a broad range of dinucleotide pyrophosphates. The polypeptide is NAD-capped RNA hydrolase NudC (Haemophilus influenzae (strain 86-028NP)).